The chain runs to 90 residues: Small ribosomal subunit protein uS15c (90 aa).

This sequence belongs to the universal ribosomal protein uS15 family. In terms of assembly, part of the 30S ribosomal subunit.

The protein resides in the plastid. It localises to the chloroplast. The sequence is that of Small ribosomal subunit protein uS15c (rps15) from Citrus sinensis (Sweet orange).